The chain runs to 267 residues: Mannose-specific lectin 1 (267 aa).

The signal sequence occupies residues 1 to 24 (MAKSLVLSSLLLALLLAAPLASLA). 2 Bulb-type lectin domains span residues 26–136 (NNVL…APNR) and 150–260 (RNVL…SPAR). Cystine bridges form between Cys-54/Cys-76 and Cys-178/Cys-203.

In terms of assembly, heterotetramer of 2 domain 1 and 2 domain 2 chains arranged as a dimer of domain 1/domain 2 heterodimers.

Functionally, mannose-specific lectin. Has weak agglutinating activity towards trypsin-treated erythrocytes from rabbit but not from human. The polypeptide is Mannose-specific lectin 1 (Crocus vernus (Dutch crocus)).